A 391-amino-acid chain; its full sequence is Solute carrier family 35 member F2 (391 aa).

The next 10 helical transmembrane spans lie at 39-59, 73-93, 108-128, 137-157, 165-185, 200-220, 230-250, 267-287, 294-314, and 318-338; these read MLLS…IRLT, LFQS…TLAV, WWKY…VVKA, IQLL…FFLL, FIGA…DVLM, LIGD…SVCQ, VELL…QLAI, LLYV…PVVI, AINL…LFLF, and FSGL…FYFS. The tract at residues 361–391 is disordered; sequence VELPSSGQLEPSVTYTSLSQETEEEPRVRVA. A compositionally biased stretch (polar residues) spans 365 to 380; sequence SSGQLEPSVTYTSLSQ.

It belongs to the SLC35F solute transporter family.

The protein localises to the membrane. Putative solute transporter. The sequence is that of Solute carrier family 35 member F2 (slc35f2) from Xenopus tropicalis (Western clawed frog).